The sequence spans 547 residues: MASADRVTAPVDTVTTGPIEGSVKHYREVDGLRIPVRRINLTNGETFDVYDTSGPYTDENATIDLEAGLPKLRDSWDKPTVAGPRTQLAWARAGIVTPEMRFIAAREGVEPELVRAEVAAGRAVIPANHNHPELEPTIIGKKFLVKINANIGNSAVSSSIAEEVEKMVWATRWGADTIMDLSTGKNIHETREWILRNSPVPVGTVPIYQALEKVNGDPAALTWEIYRDTVIEQAEQGVDYMTVHAGVLLRYVPLTAKRVTGIVSRGGSIMAAWCLAHHRESFLYTHFEELCEILARYDVTFSLGDGLRPGSVADANDEAQFAELRTLGELTKIAKSHGVQVMIEGPGHVPMHKIVENVRLEEELCEEAPFYTLGPLATDIAPAYDHITSAIGAAIIAQAGTAMLCYVTPKEHLGLPNRDDVKTGVITYKIAAHAADLAKGHPHAQQRDDALSKARFEFRWRDQFALSLDPDTAREYHDETMPAEPAKTAHFCSMCGPKFCSMRISADVREYAEANNLTDVAAIEAGMAAKSAEFAESGGKVYLPVVS.

Residues Asn-150, Met-179, Tyr-208, His-244, Ser-264–Gly-266, Asp-305–Arg-308, and Glu-344 each bind substrate. His-348 contributes to the Zn(2+) binding site. Substrate is bound at residue Tyr-371. Residue His-412 coordinates Zn(2+). Positions 492, 495, and 500 each coordinate [4Fe-4S] cluster.

The protein belongs to the ThiC family. [4Fe-4S] cluster serves as cofactor.

The catalysed reaction is 5-amino-1-(5-phospho-beta-D-ribosyl)imidazole + S-adenosyl-L-methionine = 4-amino-2-methyl-5-(phosphooxymethyl)pyrimidine + CO + 5'-deoxyadenosine + formate + L-methionine + 3 H(+). The protein operates within cofactor biosynthesis; thiamine diphosphate biosynthesis. Catalyzes the synthesis of the hydroxymethylpyrimidine phosphate (HMP-P) moiety of thiamine from aminoimidazole ribotide (AIR) in a radical S-adenosyl-L-methionine (SAM)-dependent reaction. In Nocardia farcinica (strain IFM 10152), this protein is Phosphomethylpyrimidine synthase.